A 277-amino-acid polypeptide reads, in one-letter code: MLLADTWYPNWWQALILGMVQGITEFLPISSTAHLRVFPALVGWPDAGASFTAVIQLGSLGAVLIYFASDLRQLILGSWKAWRERDFQQEPWRLSVGILVGTVPIVVAGWAIKAIWGSPPRQLWVIATAAIGLAVLLGWAEQTGKRQRDLHSLGIWDGIWVGLAQALSLIPGVSRSGSTLTAGLFLHLQRSAAARYSFLLGIPALFLAGVVEFISEFEAEALLPQGLGTLSAFVFSYLSIDWLIQFLQRSSTWLFIVYRIGFGLFIILGLALGFLRP.

The next 8 helical transmembrane spans lie at 11-31, 47-67, 96-116, 123-143, 153-173, 197-217, 227-247, and 254-274; these read WWQA…PISS, AGAS…LIYF, VGIL…KAIW, LWVI…AEQT, LGIW…IPGV, SFLL…ISEF, LGTL…IQFL, and LFIV…ALGF.

The protein belongs to the UppP family.

Its subcellular location is the cell inner membrane. The enzyme catalyses di-trans,octa-cis-undecaprenyl diphosphate + H2O = di-trans,octa-cis-undecaprenyl phosphate + phosphate + H(+). Catalyzes the dephosphorylation of undecaprenyl diphosphate (UPP). Confers resistance to bacitracin. This Synechococcus sp. (strain JA-2-3B'a(2-13)) (Cyanobacteria bacterium Yellowstone B-Prime) protein is Undecaprenyl-diphosphatase.